A 251-amino-acid polypeptide reads, in one-letter code: MAVHLLIVDALNLIRRIHAVQGSPCVETCQHALDQLIMHSQPTHAVAVFDDENRSSGWRHQRLPDYKAGRPPMQEELHNEMPALRAAFEQRGVPCWSASGNEADDLAATLAVKVTQAGHQATIVSTDKGYCQLLSPTLRIRDYFQKRWLDAPFIDKEFGVQPQQLPDYWGLAGISSSKVPGVAGIGPKSATQLLVEFQSLEGIYENLDAVAEKWRKKLETHKEMAFLCRDIARLQTDLHIDGNLQQLRLVR.

Asp104 is a binding site for Mg(2+). A 5'-3' exonuclease domain is found at 160 to 249; it reads VQPQQLPDYW…IDGNLQQLRL (90 aa). Leu171, Ala172, Pro180, Val182, and Ile185 together coordinate K(+). Positions 184 to 189 are interaction with DNA; sequence GIGPKS.

It belongs to the Xni family. It depends on Mg(2+) as a cofactor. The cofactor is K(+).

In terms of biological role, has flap endonuclease activity. During DNA replication, flap endonucleases cleave the 5'-overhanging flap structure that is generated by displacement synthesis when DNA polymerase encounters the 5'-end of a downstream Okazaki fragment. The chain is Flap endonuclease Xni from Escherichia coli O7:K1 (strain IAI39 / ExPEC).